We begin with the raw amino-acid sequence, 545 residues long: High-affinity glucose transporter 1 (545 aa).

A run of 9 helical transmembrane segments spans residues 29 to 49 (VFFIASISTIAGMMFGFDISS), 72 to 92 (GFITSSMALGSFFGSIASSFV), 100 to 120 (LSLLTCAFFWMVGAAIQSSVQ), 125 to 145 (LIIGRIISGIGVGFGSAVAPV), 157 to 177 (GLIGGMFQFFVTLGIMIMFYL), 192 to 212 (IAWGLQIVPGLCLFLGCFFIP), 291 to 311 (LTGMNVMMYYIVYIFQMAGYS), 317 to 337 (VASSIQYVINTCVTVPALYFI), and 345 to 365 (LLIGGATMMMAFQFGLAGILG). 2 N-linked (GlcNAc...) asparagine glycosylation sites follow: N376 and N387. 2 helical membrane passes run 395–415 (IACCYLFVASFAFTWGVGIWV) and 433–453 (ISTSANWILNFAIAMYTPTGF). N-linked (GlcNAc...) asparagine glycosylation is present at N455. A helical membrane pass occupies residues 460–480 (TYIIYGVFCFAMATHVYFGFP). The segment at 524–545 (VEHEEDKLMNEDSNSESRENQA) is disordered.

It belongs to the major facilitator superfamily. Sugar transporter (TC 2.A.1.1) family. Interacts with the human complement factors FH and C4BP. Also binds human immunodeficiency virus (HIV) protein gp160.

It is found in the cell membrane. In terms of biological role, high-affinity glucose transporter. Acts as a multifunctional complement-evasion molecule that causes down-regulation of complement activation by acquisition of human complement factors FH and C4BP. Also functions as a human immunodeficiency virus (HIV) receptor via binding the viral gp160 protein. Modulates hyphae formation. This chain is High-affinity glucose transporter 1, found in Candida albicans (strain SC5314 / ATCC MYA-2876) (Yeast).